The chain runs to 121 residues: Small ribosomal subunit protein uS13 (121 aa).

The interval 93–121 is disordered; sequence RGLPMRGQRTRTNARTRKGPRKAAQSLKK.

The protein belongs to the universal ribosomal protein uS13 family. In terms of assembly, part of the 30S ribosomal subunit. Forms a loose heterodimer with protein S19. Forms two bridges to the 50S subunit in the 70S ribosome.

In terms of biological role, located at the top of the head of the 30S subunit, it contacts several helices of the 16S rRNA. In the 70S ribosome it contacts the 23S rRNA (bridge B1a) and protein L5 of the 50S subunit (bridge B1b), connecting the 2 subunits; these bridges are implicated in subunit movement. Contacts the tRNAs in the A and P-sites. The polypeptide is Small ribosomal subunit protein uS13 (Variovorax paradoxus (strain S110)).